The primary structure comprises 171 residues: ATP synthase subunit b (171 aa).

The helical transmembrane segment at 12 to 34 (FALNLNLFETNVINLAVVAFGLY) threads the bilayer.

The protein belongs to the ATPase B chain family. As to quaternary structure, F-type ATPases have 2 components, F(1) - the catalytic core - and F(0) - the membrane proton channel. F(1) has five subunits: alpha(3), beta(3), gamma(1), delta(1), epsilon(1). F(0) has four main subunits: a(1), b(1), b'(1) and c(10-14). The alpha and beta chains form an alternating ring which encloses part of the gamma chain. F(1) is attached to F(0) by a central stalk formed by the gamma and epsilon chains, while a peripheral stalk is formed by the delta, b and b' chains.

The protein resides in the cellular thylakoid membrane. Its function is as follows. F(1)F(0) ATP synthase produces ATP from ADP in the presence of a proton or sodium gradient. F-type ATPases consist of two structural domains, F(1) containing the extramembraneous catalytic core and F(0) containing the membrane proton channel, linked together by a central stalk and a peripheral stalk. During catalysis, ATP synthesis in the catalytic domain of F(1) is coupled via a rotary mechanism of the central stalk subunits to proton translocation. Functionally, component of the F(0) channel, it forms part of the peripheral stalk, linking F(1) to F(0). The protein is ATP synthase subunit b of Prochlorococcus marinus (strain SARG / CCMP1375 / SS120).